A 360-amino-acid chain; its full sequence is Peptide chain release factor 1 (360 aa).

Gln235 carries the N5-methylglutamine modification.

Belongs to the prokaryotic/mitochondrial release factor family. In terms of processing, methylated by PrmC. Methylation increases the termination efficiency of RF1.

The protein localises to the cytoplasm. Functionally, peptide chain release factor 1 directs the termination of translation in response to the peptide chain termination codons UAG and UAA. The protein is Peptide chain release factor 1 of Janthinobacterium sp. (strain Marseille) (Minibacterium massiliensis).